A 72-amino-acid polypeptide reads, in one-letter code: Translation initiation factor IF-1 (72 aa).

The S1-like domain occupies 2–72 (AKDDVIEVEG…TRGRITYRYK (71 aa)). Tyrosine 60 bears the Phosphotyrosine mark.

Belongs to the IF-1 family. Component of the 30S ribosomal translation pre-initiation complex which assembles on the 30S ribosome in the order IF-2 and IF-3, IF-1 and N-formylmethionyl-tRNA(fMet); mRNA recruitment can occur at any time during PIC assembly.

Its subcellular location is the cytoplasm. One of the essential components for the initiation of protein synthesis. Stabilizes the binding of IF-2 and IF-3 on the 30S subunit to which N-formylmethionyl-tRNA(fMet) subsequently binds. Helps modulate mRNA selection, yielding the 30S pre-initiation complex (PIC). Upon addition of the 50S ribosomal subunit IF-1, IF-2 and IF-3 are released leaving the mature 70S translation initiation complex. This Bacillus subtilis (strain 168) protein is Translation initiation factor IF-1.